We begin with the raw amino-acid sequence, 513 residues long: MPYLLEMKNITKTFGSVKAIDNVSLRLNAGEIVSLCGENGSGKSTLMKVLCGIYPHGSYEGEIIFAGEEIQASHIRDTERKGIAIIHQELALVKELTVLENIFLGNEITHNGIMDYDLMTLRCQKLLAQVSLSISPDTRVGDLGLGQQQLVEIAKALNKQVRLLILDEPTASLTEQETSVLLDIIRDLQQHGIACIYISHKLNEVKAISDTICVIRDGQHIGTRDAAGMSEDDIITMMVGRELTALYPNEPHTTGDEILRIEHLTAWHPVNRHIKRVNDVSFSLKRGEILGIAGLVGAGRTETIQCLFGVWPGQWEGKIYIDGKQVDIRNCQQAIAQGIAMVPEDRKRDGIVPVMAVGKNITLAALNKFTGGISQLDDAAEQKCILESIQQLKVKTSSSDLAIGRLSGGNQQKAILARCLLLNPRILILDEPTRGIDIGAKYEIYKLINQLVQQGIAVIVISSELPEVLGLSDRVLVMHEGKLKANLINHNLTQEQVMEAALRSEHHVEKQSV.

ABC transporter domains lie at 5–242 (LEMK…VGRE) and 259–505 (LRIE…LRSE). 37-44 (GENGSGKS) contributes to the ATP binding site.

Belongs to the ABC transporter superfamily. Xylose importer (TC 3.A.1.2.4) family. As to quaternary structure, the complex is composed of two ATP-binding proteins (XylG), two transmembrane proteins (XylH) and a solute-binding protein (XylF).

Its subcellular location is the cell inner membrane. The enzyme catalyses D-xylose(out) + ATP + H2O = D-xylose(in) + ADP + phosphate + H(+). Part of the ABC transporter complex XylFGH involved in xylose import. Responsible for energy coupling to the transport system. The polypeptide is Xylose import ATP-binding protein XylG (Escherichia coli (strain UTI89 / UPEC)).